We begin with the raw amino-acid sequence, 175 residues long: Large ribosomal subunit protein uL15 (175 aa).

Basic and acidic residues predominate over residues 1-13 (MTIKLNELRDNNG). Disordered stretches follow at residues 1–44 (MTIK…KARS) and 150–175 (VELP…AKNA). Over residues 23-37 (RGIGSGKGKTAGRGQ) the composition is skewed to gly residues.

The protein belongs to the universal ribosomal protein uL15 family. As to quaternary structure, part of the 50S ribosomal subunit.

Binds to the 23S rRNA. The protein is Large ribosomal subunit protein uL15 of Sphingopyxis alaskensis (strain DSM 13593 / LMG 18877 / RB2256) (Sphingomonas alaskensis).